Here is a 256-residue protein sequence, read N- to C-terminus: Imidazole glycerol phosphate synthase subunit HisF (256 aa).

Active-site residues include D11 and D130.

The protein belongs to the HisA/HisF family. As to quaternary structure, heterodimer of HisH and HisF.

Its subcellular location is the cytoplasm. The catalysed reaction is 5-[(5-phospho-1-deoxy-D-ribulos-1-ylimino)methylamino]-1-(5-phospho-beta-D-ribosyl)imidazole-4-carboxamide + L-glutamine = D-erythro-1-(imidazol-4-yl)glycerol 3-phosphate + 5-amino-1-(5-phospho-beta-D-ribosyl)imidazole-4-carboxamide + L-glutamate + H(+). It participates in amino-acid biosynthesis; L-histidine biosynthesis; L-histidine from 5-phospho-alpha-D-ribose 1-diphosphate: step 5/9. Functionally, IGPS catalyzes the conversion of PRFAR and glutamine to IGP, AICAR and glutamate. The HisF subunit catalyzes the cyclization activity that produces IGP and AICAR from PRFAR using the ammonia provided by the HisH subunit. This chain is Imidazole glycerol phosphate synthase subunit HisF, found in Methylocella silvestris (strain DSM 15510 / CIP 108128 / LMG 27833 / NCIMB 13906 / BL2).